The primary structure comprises 427 residues: MSTSFENKATNRGVITFTIGQDKIKPALDQAFNKIKKDLNVPGFRKGHLPRPIFNQKFGEEVLYEDALNIVLPAAYEAAVAELDLAVVAQPKIDVVSMEKGKDWEISAEVVTKPEVKLGEYKDLAVEVEASKEVTDEEVDAKIERERQNLAELVVKEDAAVEGDTVVIDFVGSVDGVEFDGGKGENFSLELGSGQFIPGFEDQLVGTKAGETKNVEVTFPEDYQAEDLAGKAATFVTTVHEVKSKEVPALDDELAKDIDEEVETLDELKAKYRKELEAAKEIAFDDAVEGAAIELAVANAEIVELPEEMVHDEVHRAMNEFMGNMQRQGISPEMYFQLTGTTQEDLHKQYESEADKRVKTNLVIEAIAKAEGFEATDEEIEKEINDLATEYNMPVEQVRTLLSADMLKHDIAMKKAVEVITETVKVK.

Positions 163-248 (GDTVVIDFVG…VHEVKSKEVP (86 aa)) constitute a PPIase FKBP-type domain.

The protein belongs to the FKBP-type PPIase family. Tig subfamily.

It localises to the cytoplasm. The enzyme catalyses [protein]-peptidylproline (omega=180) = [protein]-peptidylproline (omega=0). Functionally, involved in protein export. Acts as a chaperone by maintaining the newly synthesized protein in an open conformation. Functions as a peptidyl-prolyl cis-trans isomerase. The protein is Trigger factor of Streptococcus uberis (strain ATCC BAA-854 / 0140J).